A 121-amino-acid chain; its full sequence is Large ribosomal subunit protein uL18 (121 aa).

The protein belongs to the universal ribosomal protein uL18 family. In terms of assembly, part of the 50S ribosomal subunit; part of the 5S rRNA/L5/L18/L25 subcomplex. Contacts the 5S and 23S rRNAs.

In terms of biological role, this is one of the proteins that bind and probably mediate the attachment of the 5S RNA into the large ribosomal subunit, where it forms part of the central protuberance. The polypeptide is Large ribosomal subunit protein uL18 (Anaplasma phagocytophilum (strain HZ)).